The chain runs to 189 residues: Ribosome maturation factor RimM (189 aa).

In terms of domain architecture, PRC barrel spans 96-169 (EDEFYYADLE…TLLIDPLAAG (74 aa)).

Belongs to the RimM family. As to quaternary structure, binds ribosomal protein uS19.

It localises to the cytoplasm. Its function is as follows. An accessory protein needed during the final step in the assembly of 30S ribosomal subunit, possibly for assembly of the head region. Essential for efficient processing of 16S rRNA. May be needed both before and after RbfA during the maturation of 16S rRNA. It has affinity for free ribosomal 30S subunits but not for 70S ribosomes. The chain is Ribosome maturation factor RimM from Rhizobium johnstonii (strain DSM 114642 / LMG 32736 / 3841) (Rhizobium leguminosarum bv. viciae).